The chain runs to 339 residues: Biotin synthase (339 aa).

A Radical SAM core domain is found at 55–288 (LSEGALHSCS…GKIIKFAAGR (234 aa)). Positions 73, 77, and 80 each coordinate [4Fe-4S] cluster. Residues C152, C213, and K283 each contribute to the [2Fe-2S] cluster site.

This sequence belongs to the radical SAM superfamily. Biotin synthase family. Homodimer. It depends on [4Fe-4S] cluster as a cofactor. [2Fe-2S] cluster serves as cofactor.

It carries out the reaction (4R,5S)-dethiobiotin + (sulfur carrier)-SH + 2 reduced [2Fe-2S]-[ferredoxin] + 2 S-adenosyl-L-methionine = (sulfur carrier)-H + biotin + 2 5'-deoxyadenosine + 2 L-methionine + 2 oxidized [2Fe-2S]-[ferredoxin]. It participates in cofactor biosynthesis; biotin biosynthesis; biotin from 7,8-diaminononanoate: step 2/2. Its function is as follows. Catalyzes the conversion of dethiobiotin (DTB) to biotin by the insertion of a sulfur atom into dethiobiotin via a radical-based mechanism. In Chlorobium phaeobacteroides (strain BS1), this protein is Biotin synthase.